Consider the following 507-residue polypeptide: MKKIMIDGEQLTLQDIIHVTRNFYEIELSEDAKNRVRNNRKVVDRYVEEEKVVYGITTGFGKFSDVVISKSETEALQRNLIISHACGVGNPLEEDVVRGIMLLRANALSKGYSGIRLETLSTLIEMLNKGVHPVIPEKGSLGASGDLAPLSHMVLVLIGEGEAIYQGKRMSGREAMEAAGIRPVVLTSKEGLALINGTQVMTAIGALTVYDAINLSKISDIAAALTIEAQRGIVTAFDKRVHEVRPHAGQISCAENLNRLLEGSTYTTKQGEIKVQDAYTLRCIPQIHGASKDAIQYVENKINIEINSATDNPLIFSEDNDVISGGNFHGQPMALSFDFLGIALAEIANVSERRIERLVNPQLSGLPAFLTEKGGLNSGFMITQYSAAALVSENKVLAHPASVDSIPSSANQEDHVSMGTIAARKAREIYKNAVNVVAIELMAAAQGIDFYEGYTLGEGTQIAYDTIRNKVSKLQEDRVMYFDINQCANLIFSGELIEAVEKAVELQ.

The 5-imidazolinone (Ala-Gly) cross-link spans 143 to 145; that stretch reads ASG. Position 144 is a 2,3-didehydroalanine (Ser) (Ser144).

This sequence belongs to the PAL/histidase family. Post-translationally, contains an active site 4-methylidene-imidazol-5-one (MIO), which is formed autocatalytically by cyclization and dehydration of residues Ala-Ser-Gly.

Its subcellular location is the cytoplasm. The catalysed reaction is L-histidine = trans-urocanate + NH4(+). It participates in amino-acid degradation; L-histidine degradation into L-glutamate; N-formimidoyl-L-glutamate from L-histidine: step 1/3. This chain is Histidine ammonia-lyase, found in Alkaliphilus oremlandii (strain OhILAs) (Clostridium oremlandii (strain OhILAs)).